Consider the following 207-residue polypeptide: LexA repressor (207 aa).

A DNA-binding region (H-T-H motif) is located at residues 28–48; sequence RAEIARHLGFKSANAAEEHLK. Residues Ser-124 and Lys-161 each act as for autocatalytic cleavage activity in the active site.

Belongs to the peptidase S24 family. As to quaternary structure, homodimer.

The catalysed reaction is Hydrolysis of Ala-|-Gly bond in repressor LexA.. In terms of biological role, represses a number of genes involved in the response to DNA damage (SOS response), including recA and lexA. In the presence of single-stranded DNA, RecA interacts with LexA causing an autocatalytic cleavage which disrupts the DNA-binding part of LexA, leading to derepression of the SOS regulon and eventually DNA repair. The chain is LexA repressor from Pseudoalteromonas atlantica (strain T6c / ATCC BAA-1087).